Here is a 194-residue protein sequence, read N- to C-terminus: Peptidyl-tRNA hydrolase (194 aa).

Tyr16 is a tRNA binding site. The active-site Proton acceptor is His21. Residues Phe67, Asn69, and Asn115 each contribute to the tRNA site.

Belongs to the PTH family. In terms of assembly, monomer.

It is found in the cytoplasm. The catalysed reaction is an N-acyl-L-alpha-aminoacyl-tRNA + H2O = an N-acyl-L-amino acid + a tRNA + H(+). Its function is as follows. Hydrolyzes ribosome-free peptidyl-tRNAs (with 1 or more amino acids incorporated), which drop off the ribosome during protein synthesis, or as a result of ribosome stalling. Functionally, catalyzes the release of premature peptidyl moieties from peptidyl-tRNA molecules trapped in stalled 50S ribosomal subunits, and thus maintains levels of free tRNAs and 50S ribosomes. This chain is Peptidyl-tRNA hydrolase, found in Citrobacter koseri (strain ATCC BAA-895 / CDC 4225-83 / SGSC4696).